A 117-amino-acid chain; its full sequence is MKETPCPNCGKPLTGDMVRSSNVPCQFRCGHCRERLYEYKVSAPIMLVSLAAIVLLIYLLMLLRNAAGSVLPAVQHVPMAVFALVCAYPVFIVSERMIAKYVIQNGNIIYRGKRKGS.

The next 2 helical transmembrane spans lie at 43-63 (APIMLVSLAAIVLLIYLLMLL) and 73-93 (AVQHVPMAVFALVCAYPVFIV).

The protein resides in the cell membrane. This is an uncharacterized protein from Bacillus subtilis (strain 168).